Reading from the N-terminus, the 159-residue chain is Ribosomal RNA large subunit methyltransferase H (159 aa).

S-adenosyl-L-methionine contacts are provided by residues Leu76, Gly108, and 127–132 (FGLLTL).

This sequence belongs to the RNA methyltransferase RlmH family. As to quaternary structure, homodimer.

It is found in the cytoplasm. The enzyme catalyses pseudouridine(1915) in 23S rRNA + S-adenosyl-L-methionine = N(3)-methylpseudouridine(1915) in 23S rRNA + S-adenosyl-L-homocysteine + H(+). In terms of biological role, specifically methylates the pseudouridine at position 1915 (m3Psi1915) in 23S rRNA. This is Ribosomal RNA large subunit methyltransferase H from Streptococcus agalactiae serotype Ia (strain ATCC 27591 / A909 / CDC SS700).